The following is a 449-amino-acid chain: Hyaluronidase (449 aa).

The N-terminal stretch at 1 to 23 (MYHIWIKFLAAWIFLKRFNGVHV) is a signal peptide. Disulfide bonds link cysteine 47–cysteine 340 and cysteine 211–cysteine 227. Residues asparagine 67, asparagine 103, and asparagine 111 are each glycosylated (N-linked (GlcNAc...) asparagine). Glutamate 135 functions as the Proton donor in the catalytic mechanism. N-linked (GlcNAc...) asparagine glycosylation is present at asparagine 153. Asparagine 357 carries an N-linked (GlcNAc...) asparagine glycan. 3 cysteine pairs are disulfide-bonded: cysteine 365-cysteine 376, cysteine 370-cysteine 427, and cysteine 429-cysteine 438. A glycan (N-linked (GlcNAc...) asparagine) is linked at asparagine 401. Residues 427–438 (CQCYQGWKGLYC) enclose the EGF-like domain.

This sequence belongs to the glycosyl hydrolase 56 family. As to quaternary structure, monomer. As to expression, expressed by the venom gland.

It localises to the secreted. It catalyses the reaction Random hydrolysis of (1-&gt;4)-linkages between N-acetyl-beta-D-glucosamine and D-glucuronate residues in hyaluronate.. Snake venom endo-hyaluronidase that degrades hyaluronan to smaller oligosaccharide fragments. In venom, it is not toxic by itself, but increases the diffusion of other venom proteins by degrading the extracellular matrix. In addition, it displays antiedematogenic activity. The polypeptide is Hyaluronidase (Echis pyramidum leakeyi (Leakey's carpet viper)).